Consider the following 829-residue polypeptide: Potassium voltage-gated channel unc-103 (829 aa).

The interval 1–76 (MKTAVFGRDS…PRASHSSRRT (76 aa)) is disordered. Over 1–123 (MKTAVFGRDS…YSPFKAVWDW (123 aa)) the chain is Cytoplasmic. The segment covering 46 to 66 (GVSGTGGGGSGGLQGAPGAGG) has biased composition (gly residues). Residues 124–144 (IILLLVIYTAVFTPYVAAFLL) form a helical membrane-spanning segment. The Extracellular portion of the chain corresponds to 145–158 (RELQDTAKKSRFTE). Residues 159–179 (PLEIVDLIVDIMFIVDIIINF) traverse the membrane as a helical segment. At 180–203 (RTTYVNENDEACQVVSDPGKIATH) the chain is on the cytoplasmic side. The helical transmembrane segment at 204-224 (YFKGWFIIDMVAAVPFDLLLV) threads the bilayer. Residues 225-234 (STNSDETTTL) are Extracellular-facing. Residues 235 to 255 (IGLLKTARLLRLVRVARKLDR) form a helical; Voltage-sensor membrane-spanning segment. Over 256-261 (YSEYGA) the chain is Cytoplasmic. A helical transmembrane segment spans residues 262 to 282 (AVLLLLMATFALIAHWLACIW). The Extracellular portion of the chain corresponds to 283-327 (YAIGSAELSHKEYTWLHQLSKQLAQPYTSTNGTIPTGGPTLKSRY). The N-linked (GlcNAc...) asparagine glycan is linked to asparagine 313. An intramembrane region (pore-forming) is located at residues 328–348 (VTSLYFTLSTITSIGFGNVSA). Residues 349-354 (TTDSEK) lie on the Extracellular side of the membrane. Residues 355-375 (IFTIIMMILGSLMYASVFGNV) traverse the membrane as a helical segment. Residues 376–829 (SAIIQRLYSG…TPTQETDTIL (454 aa)) lie on the Cytoplasmic side of the membrane. Position 458–559 (458–559 (AFAGSTPGCL…ILRDDLLDVL (102 aa))) interacts with a nucleoside 3',5'-cyclic phosphate. A disordered region spans residues 601-674 (SMNKDRYTTP…PLLRRSTNHH (74 aa)). The segment covering 603 to 615 (NKDRYTTPPDGDH) has biased composition (basic and acidic residues). A compositionally biased stretch (low complexity) spans 640–650 (SAGSRSSSRCS).

The protein belongs to the potassium channel family. H (Eag) (TC 1.A.1.20) subfamily. Kv11.1/KCNH2 sub-subfamily. As to quaternary structure, the potassium channel is composed of a homo- or heterotetrameric complex. Interacts with dnj-1; dnj-1 chaperone promotes tetramerization.

The protein resides in the cell membrane. Functionally, pore-forming (alpha) subunit of voltage-gated inwardly rectifying potassium channel. Channel properties are modulated by cAMP and subunit assembly. Regulates the movements of the male's copulatory spicules before and during male mating behavior. The chain is Potassium voltage-gated channel unc-103 from Caenorhabditis elegans.